The following is an 874-amino-acid chain: MLKKFDKKDEESGGGSNPLQHLEKSAVLQEARVFNETPINPRKCAHILTKILYLINQGEHLGTTEATEAFFAMTKLFQSNDPTLRRMCYLTIKEMSCIAEDVIIVTSSLTKDMTGKEDNYRGPAVRALCQITDSTMLQAVERYMKQAIVDKVPSVSSSALVSSLHLLKCSFDVVKRWVNEAQEAASSDNIMVQYHALGLLYHVRKNDRLAVSKMISKFTRHGLKSPFAYCMMIRVASKQLEEEDGSRDSPLFDFIESCLRNKHEMVVYEAASAIVNLPGCSAKELAPAVSVLQLFCSSPKAALRYAAVRTLNKVAMKHPSAVTACNLDLENLVTDSNRSIATLAITTLLKTGSESSIDRLMKQISSFMSEISDEFKVVVVQAISALCQKYPRKHAVLMNFLFTMLREEGGFEYKRAIVDCIISIIEENSESKETGLSHLCEFIEDCEFTVLATRILHLLGQEGPKTNNPSKYIRFIYNRVVLEHEEVRAGAVSALAKFGAQNEEMLPSILVLLKRCVMDDDNEVRDRATFYLNVLEQKQKALNAGYILNGLTVSIPGLEKALQQYTLEPSEKPFDLKSVPLATTPMAEQRPESTATAAVKQPEKVAATRQEIFQEQLAAVPEFQGLGPLFKSSPEPVALTESETEYVIRCTKHTFSDHLVFQFDCTNTLNDQTLENVTVQMEPTEAYEVLSYVPARSLPYNQPGTCYTLVALPTEDPTAVACTFSCVMKFTVKDCDPNTGEIDEEGYEDEYVLEDLEVTVADHIQKVMKVNFEAAWDEVGDEFEKEETFTLSTIKTLEEAVGNIVKFLGMHPCERSDKVPENKNTHTLLLAGVFRGGHDILVRSRLLLLDTVTMQVTARSSEELPVDIILASVG.

Positions 1–11 (MLKKFDKKDEE) are enriched in basic and acidic residues. A disordered region spans residues 1 to 21 (MLKKFDKKDEESGGGSNPLQH). HEAT repeat units lie at residues 64-101 (TEAT…IAED), 283-320 (KELA…KHPS), 322-355 (VTAC…GSES), and 356-392 (SIDR…KYPR). Phosphothreonine is present on Thr-594. The segment at 609 to 874 (RQEIFQEQLA…PVDIILASVG (266 aa)) is interaction with ZNF289/ARFGAP2.

Belongs to the COPG family. As to quaternary structure, oligomeric complex that consists of at least the alpha, beta, beta', gamma, delta, epsilon and zeta subunits. Interacts with ZNF289/ARFGAP2 through its C-terminal appendage domain. Interacts with EGFR upon EGF treatment; interaction is essential for regulation of EGF-dependent nuclear transport of EGFR by retrograde trafficking from the Golgi to the ER. The coatomer interacts with KDEL receptors; the interaction is important for retrograde trafficking of KDEL-bearing proteins from the Golgi to the endoplasmic reticulum. Interacts with COPB1. Interacts with TMED10 (via C-terminus). Interacts with TMED2, TMED3, TMED7 and TMED9.

The protein resides in the cytoplasm. The protein localises to the cytosol. It is found in the golgi apparatus membrane. It localises to the cytoplasmic vesicle. Its subcellular location is the COPI-coated vesicle membrane. Its function is as follows. The coatomer is a cytosolic protein complex that binds to dilysine motifs and reversibly associates with Golgi non-clathrin-coated vesicles, which further mediate biosynthetic protein transport from the ER, via the Golgi up to the trans Golgi network. Coatomer complex is required for budding from Golgi membranes, and is essential for the retrograde Golgi-to-ER transport of dilysine-tagged proteins. In mammals, the coatomer can only be recruited by membranes associated to ADP-ribosylation factors (ARFs), which are small GTP-binding proteins; the complex also influences the Golgi structural integrity, as well as the processing, activity, and endocytic recycling of LDL receptors. Required for limiting lipid storage in lipid droplets. Involved in lipid homeostasis by regulating the presence of perilipin family members PLIN2 and PLIN3 at the lipid droplet surface and promoting the association of adipocyte triglyceride lipase (PNPLA2) with the lipid droplet surface to mediate lipolysis. The protein is Coatomer subunit gamma-1 (Copg1) of Mus musculus (Mouse).